A 346-amino-acid polypeptide reads, in one-letter code: Uroporphyrinogen decarboxylase (346 aa).

Residues 23–27 (RQAGR), D72, Y155, S209, and H322 contribute to the substrate site.

The protein belongs to the uroporphyrinogen decarboxylase family. As to quaternary structure, homodimer.

The protein localises to the cytoplasm. The enzyme catalyses uroporphyrinogen III + 4 H(+) = coproporphyrinogen III + 4 CO2. The protein operates within porphyrin-containing compound metabolism; protoporphyrin-IX biosynthesis; coproporphyrinogen-III from 5-aminolevulinate: step 4/4. In terms of biological role, catalyzes the decarboxylation of four acetate groups of uroporphyrinogen-III to yield coproporphyrinogen-III. This Anaeromyxobacter sp. (strain Fw109-5) protein is Uroporphyrinogen decarboxylase.